A 582-amino-acid polypeptide reads, in one-letter code: MAEFLDDQETRLCDNCKKEIPVFNFTIHEIHCQRNIGMCPTCKEPFPKSDMETHMAAEHCQVTCKCNKKLEKRLLKKHEETECPLRLAVCQHCDLELSILKLKEHEDYCGARTELCGNCGRNVLVKDLKTHPEVCGREGEEKRNEVAIPPNAYDESWGQDGIWIASQLLRQIEALDPPMRLPRRPLRAFESDVFHNRTTNQRNITAQVSIQNNLFEEQERQERNRGQQPPKEGGEESANLDFMLALSLQNEGQASSVAEQDFWRAVCEADQSHGGPRSLSDIKGAADEIMLPCEFCEELYPEELLIDHQTSCNPSRALPSLNTGSSSPRGVEEPDVIFQNFLQQAASNQLDSLMGLSNSHPVEESIIIPCEFCGVQLEEEVLFHHQDQCDQRPATATNHVTEGIPRLDSQPQETSPELPRRRVRHQGDLSSGYLDDTKQETANGPTSCLPPSRPINNMTATYNQLSRSTSGPRPGCQPSSPCVPKLSNSDSQDIQGRNRDSQNGAIAPGHVSVIRPPQNLYPENIVPSFSPGPSGRYGASGRSEGGRNSRVTPAAANYRSRTAKAKPSKQQGAGDAEEEEEE.

Residue Ala-2 is modified to N-acetylalanine. The segment at 27–103 adopts a TRAF-type zinc-finger fold; it reads IHEIHCQRNI…DLELSILKLK (77 aa). Ser-191 is subject to Phosphoserine. A disordered region spans residues 217 to 236; it reads EQERQERNRGQQPPKEGGEE. Ser-278, Ser-320, Ser-326, Ser-327, Ser-409, Ser-415, Ser-430, and Ser-470 each carry phosphoserine. Positions 401–582 are disordered; that stretch reads TEGIPRLDSQ…AGDAEEEEEE (182 aa). Polar residues-rich tracts occupy residues 454–471 and 486–495; these read PINN…STSG and LSNSDSQDIQ.

As to quaternary structure, interacts with MAVS, TICAM1, TRAF1, TRAF2, TRAF3. Interacts with TRAF6.

Negative feedback regulator that controls excessive innate immune responses. Regulates both Toll-like receptor 4 (TLR4) and DDX58/RIG1-like helicases (RLH) pathways. May inhibit the LTR pathway by direct interaction with TRAF6 and attenuation of NF-kappa-B activation. May negatively regulate the RLH pathway downstream from MAVS and upstream of NF-kappa-B and IRF3. This Homo sapiens (Human) protein is TRAF-type zinc finger domain-containing protein 1 (TRAFD1).